The primary structure comprises 430 residues: MSIPDENIILEGSLKRCKKYKLFKTKWVEHYFVLHCRDRERNLFAIDEFKTSRKNDLKKRFKLEFVIRVESNLSVSDPSILCTAGGGHQEESMLNCIFGVGFRFENIVKDLYLVAKNDEEMTLWVNEICKLCKLHRQHDEGDSSHAAESSISGMSMSSQSLDMSIIEQQQYAENIPESKQYHRMHHFKSVISHNSLPSNPNYNNLPDPLESSRSETSSMYSSRRTEDDSVSYTSGPPVPPPRTRHTLNRFVKNGQVGRLHMIPASTSMGQVVKVEDAEDSSGETLKLDTPEQYPESVTSSEGFPVYERNGKTLIRRAPPPVDRSNKPKNLRGEEEAGTRYRNLSRNGVNENGNYSATFSSRTSNYQQSETSKRRNLDYFEPTQMIENSSLSTLAATSTRSPTPSDIEYISVDVDRTLAFKQMRRAAQSTD.

Residues 7 to 133 form the PH domain; it reads NIILEGSLKR…WVNEICKLCK (127 aa). Positions 192 to 222 are enriched in low complexity; sequence SHNSLPSNPNYNNLPDPLESSRSETSSMYSS. Disordered regions lie at residues 192–246, 275–303, and 315–377; these read SHNS…TRHT, EDAE…SEGF, and RRAP…RNLD. Over residues 341-369 the composition is skewed to polar residues; it reads RNLSRNGVNENGNYSATFSSRTSNYQQSE.

Interacts (via C-terminus) with sem-5 (probably via SH3 domain 2). Interacts with nicotinic acetylcholine receptor. In terms of processing, may be phosphorylated.

Adapter protein which modulates signaling mediated by several receptor tyrosine kinases. Plays a role in fluid homeostasis, probably downstream of receptor egl-15 and upstream of let-60/Ras. Involved in nicotinic acetylcholine receptor (nAChR)-mediated sensitivity to nicotine and levamisole and gamma-aminobutyric acid (GABA)receptor-mediated sensitivity to muscimol. Regulates synaptic levels of nAchR receptor subunit lev-1 and unc-38, and GABA receptor subunit unc-49 in the nerve cord, probably downstream of egl-15. Regulates motility. During the formation of neuromuscular junctions at the larval stage, down-regulates membrane protrusion from body wall muscles, probably downstream of egl-15. Promotes vulva induction and down-regulates fertility, probably downstream of receptor let-23. Down-regulates daf-2-mediated repression of dauer formation and positively regulates daf-2-mediated aging. May be involved in the recruitment of phosphatase ptp-2 to egl-15. The sequence is that of Multisubstrate adapter protein soc-1 from Caenorhabditis elegans.